The following is a 268-amino-acid chain: Phosphatidylglycerol--prolipoprotein diacylglyceryl transferase (268 aa).

7 helical membrane passes run 27 to 47 (PALRWYGFTYLVGFVAAMWLL), 66 to 86 (LLFYGFLGVILGGRIGYVLFY), 104 to 124 (GGMSFHGGLMGVITAMIYIAW), 130 to 150 (FFAVADMVAPVVPIGLGAGRI), 181 to 201 (PSQLYQFALEGVALFLLLYWF), 208 to 228 (VGAVSGMFLLGYGIFRVIVET), and 242 to 262 (FMTMGQILSVPMVLFGLYLIL). Position 149 (Arg149) interacts with a 1,2-diacyl-sn-glycero-3-phospho-(1'-sn-glycerol).

Belongs to the Lgt family.

It localises to the cell inner membrane. It carries out the reaction L-cysteinyl-[prolipoprotein] + a 1,2-diacyl-sn-glycero-3-phospho-(1'-sn-glycerol) = an S-1,2-diacyl-sn-glyceryl-L-cysteinyl-[prolipoprotein] + sn-glycerol 1-phosphate + H(+). It participates in protein modification; lipoprotein biosynthesis (diacylglyceryl transfer). Its function is as follows. Catalyzes the transfer of the diacylglyceryl group from phosphatidylglycerol to the sulfhydryl group of the N-terminal cysteine of a prolipoprotein, the first step in the formation of mature lipoproteins. The chain is Phosphatidylglycerol--prolipoprotein diacylglyceryl transferase from Shewanella sp. (strain MR-4).